The following is a 111-amino-acid chain: Nucleoid-associated protein Fphi_0115 (111 aa).

The tract at residues 1-27 is disordered; that stretch reads MNFDMSKLMQQAQKMQEQMKKAQQERE. Basic and acidic residues predominate over residues 17 to 27; it reads EQMKKAQQERE.

It belongs to the YbaB/EbfC family. Homodimer.

The protein localises to the cytoplasm. The protein resides in the nucleoid. Its function is as follows. Binds to DNA and alters its conformation. May be involved in regulation of gene expression, nucleoid organization and DNA protection. The chain is Nucleoid-associated protein Fphi_0115 from Francisella philomiragia subsp. philomiragia (strain ATCC 25017 / CCUG 19701 / FSC 153 / O#319-036).